A 185-amino-acid polypeptide reads, in one-letter code: Elongation factor P (185 aa).

The protein belongs to the elongation factor P family.

It is found in the cytoplasm. Its pathway is protein biosynthesis; polypeptide chain elongation. In terms of biological role, involved in peptide bond synthesis. Stimulates efficient translation and peptide-bond synthesis on native or reconstituted 70S ribosomes in vitro. Probably functions indirectly by altering the affinity of the ribosome for aminoacyl-tRNA, thus increasing their reactivity as acceptors for peptidyl transferase. In Paraburkholderia phymatum (strain DSM 17167 / CIP 108236 / LMG 21445 / STM815) (Burkholderia phymatum), this protein is Elongation factor P.